The chain runs to 114 residues: Non-specific lipid-transfer protein 2 (114 aa).

The N-terminal stretch at 1–23 (MEMFGKIACFVVFCMVVVAPHAE) is a signal peptide. 4 disulfides stabilise this stretch: Cys27–Cys73, Cys37–Cys50, Cys51–Cys96, and Cys71–Cys110.

This sequence belongs to the plant LTP family.

In terms of biological role, plant non-specific lipid-transfer proteins transfer phospholipids as well as galactolipids across membranes. May play a role in wax or cutin deposition in the cell walls of expanding epidermal cells and certain secretory tissues. This chain is Non-specific lipid-transfer protein 2 (LE16), found in Solanum lycopersicum (Tomato).